The following is a 194-amino-acid chain: Imidazoleglycerol-phosphate dehydratase (194 aa).

Belongs to the imidazoleglycerol-phosphate dehydratase family.

The protein resides in the cytoplasm. The catalysed reaction is D-erythro-1-(imidazol-4-yl)glycerol 3-phosphate = 3-(imidazol-4-yl)-2-oxopropyl phosphate + H2O. It participates in amino-acid biosynthesis; L-histidine biosynthesis; L-histidine from 5-phospho-alpha-D-ribose 1-diphosphate: step 6/9. The protein is Imidazoleglycerol-phosphate dehydratase of Bacillus subtilis (strain 168).